Consider the following 164-residue polypeptide: Peptidyl-prolyl cis-trans isomerase A-like 4G (164 aa).

Residues F7–Q163 form the PPIase cyclophilin-type domain.

Belongs to the cyclophilin-type PPIase family. PPIase A subfamily.

The protein localises to the cytoplasm. It catalyses the reaction [protein]-peptidylproline (omega=180) = [protein]-peptidylproline (omega=0). In terms of biological role, PPIases accelerate the folding of proteins. It catalyzes the cis-trans isomerization of proline imidic peptide bonds in oligopeptides. This chain is Peptidyl-prolyl cis-trans isomerase A-like 4G (PPIAL4G), found in Homo sapiens (Human).